A 32-amino-acid polypeptide reads, in one-letter code: IPACMVEDGGCWDPLGEAFNSATQRAETLRNL.

Cys-4 and Cys-11 form a disulfide bridge.

Belongs to the somatotropin/prolactin family. Post-translationally, glycosylated. Placental basal zone cells.

It localises to the secreted. This is Growth hormone-related protein 4 from Rattus norvegicus (Rat).